The chain runs to 112 residues: Mitochondrial import inner membrane translocase subunit TIM14-3 (112 aa).

A2 is modified (N-acetylalanine). A helical transmembrane segment spans residues 6–28; it reads IAGAAVAAAAVAGRYGILAWQAF. Residues 53-112 enclose the J domain; it reads EAALILGVRESVVADKVKEAHRRVMVANHPDAGGSHYLASKINEAKDMMLGKSNNSGSAF.

Belongs to the TIM14 family. As to quaternary structure, probable component of the PAM complex at least composed of a mitochondrial HSP70 protein, TIMM44 and TIMM14. The complex interacts with the TIMM23 component of the TIM17:23 complex.

It is found in the mitochondrion. The protein localises to the mitochondrion inner membrane. Component of the PAM complex, a complex required for the translocation of transit peptide-containing proteins from the inner membrane into the mitochondrial matrix in an ATP-dependent manner. This is Mitochondrial import inner membrane translocase subunit TIM14-3 (TIM14-3) from Arabidopsis thaliana (Mouse-ear cress).